Consider the following 321-residue polypeptide: Glucokinase (321 aa).

Glycine 8–threonine 13 is an ATP binding site.

The protein belongs to the bacterial glucokinase family.

The protein localises to the cytoplasm. It catalyses the reaction D-glucose + ATP = D-glucose 6-phosphate + ADP + H(+). The sequence is that of Glucokinase from Escherichia coli (strain SMS-3-5 / SECEC).